The primary structure comprises 301 residues: Sulfate adenylyltransferase subunit 2 (301 aa).

The segment at 279 to 301 (RQGRLIDRDEAGSMEKKKREGYF) is disordered.

This sequence belongs to the PAPS reductase family. CysD subfamily. As to quaternary structure, sulfate-activating enzymes, NodP and NodQ, may be physically associated.

The catalysed reaction is sulfate + ATP + H(+) = adenosine 5'-phosphosulfate + diphosphate. Its function is as follows. Proposed to provide activated sulfate for transfer to nod factor. This is Sulfate adenylyltransferase subunit 2 (nodP) from Rhizobium sp. (strain N33).